An 890-amino-acid polypeptide reads, in one-letter code: Kinesin-like protein KIF20A (890 aa).

Serine 2 carries the N-acetylserine modification. 3 positions are modified to phosphoserine: serine 7, serine 14, and serine 21. A Kinesin motor domain is found at lysine 64 to leucine 507. ATP is bound at residue glycine 160 to threonine 167. Serine 528 is modified (phosphoserine; by PLK1). Residues serine 532, serine 662, serine 668, serine 685, and serine 825 each carry the phosphoserine modification. The stretch at leucine 611–cysteine 762 forms a coiled coil. The interval cysteine 763–tyrosine 890 is globular. A disordered region spans residues threonine 832 to aspartate 865. The residue at position 857 (threonine 857) is a Phosphothreonine. Serine 867, serine 878, and serine 883 each carry phosphoserine.

Belongs to the TRAFAC class myosin-kinesin ATPase superfamily. Kinesin family. Post-translationally, phosphorylated by PLK1 at Ser-528 during mitosis, creating a docking site for PLK1 and recruiting PLK1 at central spindle.

The protein localises to the golgi apparatus. The protein resides in the cytoplasm. It localises to the cytoskeleton. Its subcellular location is the spindle. Its function is as follows. Mitotic kinesin required for chromosome passenger complex (CPC)-mediated cytokinesis. Following phosphorylation by PLK1, involved in recruitment of PLK1 to the central spindle. Interacts with guanosine triphosphate (GTP)-bound forms of RAB6A and RAB6B. May act as a motor required for the retrograde RAB6 regulated transport of Golgi membranes and associated vesicles along microtubules. Has a microtubule plus end-directed motility. This is Kinesin-like protein KIF20A (KIF20A) from Homo sapiens (Human).